The following is a 322-amino-acid chain: CPX chromosomal region candidate gene 1 protein homolog (322 aa).

Polar residues-rich tracts occupy residues 1–23 and 37–78; these read MTSS…NETP and TNIS…TQND. The tract at residues 1-83 is disordered; the sequence is MTSSNQGNDP…MTQNDPPDEE (83 aa).

This Mus musculus (Mouse) protein is CPX chromosomal region candidate gene 1 protein homolog (Cpxcr1).